A 528-amino-acid polypeptide reads, in one-letter code: 3-ketoacyl-CoA synthase 2 (528 aa).

A run of 2 helical transmembrane segments spans residues 36–56 (LGYHYLISNAVYILILPVGLL) and 78–98 (FHFLSSTLFAALLIFLTTLYF). The region spanning 97–388 (YFTTRPRRIF…FFATLVARKV (292 aa)) is the FAE domain. Residues Cys-241, His-320, His-407, His-411, and Asn-444 contribute to the active site.

The protein belongs to the thiolase-like superfamily. Chalcone/stilbene synthases family. In terms of tissue distribution, expressed in siliques, flowers and stems. In young seedlings, expressed in the central cylinder of primary roots, in emerging lateral roots and in their root cap, but not in aboveground tissues such as hypocotyls, cotyledons and leaves. Expressed in sepals in mature flowers and in the chalaza and micropyle region of developing seeds shortly prior to or just after the detachment from the funiculus. Expressed in roots, flowers, cauline leaves and siliques.

It localises to the membrane. It catalyses the reaction a very-long-chain acyl-CoA + malonyl-CoA + H(+) = a very-long-chain 3-oxoacyl-CoA + CO2 + CoA. It participates in lipid metabolism; fatty acid biosynthesis. With respect to regulation, inhibited by K3 herbicides such as allidochlor, anilofos, cafenstrole and flufenacet. Strongly inhibited by metazachlor. In terms of biological role, mediates the synthesis of VLCFAs from 22 to 26 carbons in length (e.g. C22, C24, C26). Involved in the elongation of C20 fatty acid suberin precursors. Functionally redundant with KCS20 in the two-carbon elongation of C22 fatty acids that is required for cuticular wax and root suberin biosynthesis. The polypeptide is 3-ketoacyl-CoA synthase 2 (Arabidopsis thaliana (Mouse-ear cress)).